Consider the following 693-residue polypeptide: Polyribonucleotide nucleotidyltransferase (693 aa).

Positions 489 and 495 each coordinate Mg(2+). The 60-residue stretch at 556-615 (PQIHVMNINPAKIKDVVGRGGATVKGIVEKTGAQIDTSDSGEVKVFAKDKKSMDMAVAMI) folds into the KH domain. Residues 625-693 (GQVYKGKIVK…GRVKLSLVAR (69 aa)) enclose the S1 motif domain.

It belongs to the polyribonucleotide nucleotidyltransferase family. Component of the RNA degradosome, which is a multiprotein complex involved in RNA processing and mRNA degradation. Mg(2+) is required as a cofactor.

The protein localises to the cytoplasm. It catalyses the reaction RNA(n+1) + phosphate = RNA(n) + a ribonucleoside 5'-diphosphate. Its function is as follows. Involved in mRNA degradation. Catalyzes the phosphorolysis of single-stranded polyribonucleotides processively in the 3'- to 5'-direction. The chain is Polyribonucleotide nucleotidyltransferase from Francisella tularensis subsp. holarctica (strain OSU18).